The primary structure comprises 335 residues: Mesoderm-specific transcript protein (335 aa).

2 helical membrane passes run 13–33 (WWVQVGLLAVPLLAAYLHIPP) and 63–83 (VGVVGSPEIVVLLHGFPTSSY). The 240-residue stretch at 71–310 (IVVLLHGFPT…PRSTVSILDD (240 aa)) folds into the AB hydrolase-1 domain. An RVIALD motif is present at residues 98-103 (RVIALD). The N-linked (GlcNAc...) asparagine glycan is linked to Asn-163. Residues 266–286 (VGALASVSIPIHFIYGPLDPI) form a helical membrane-spanning segment.

It belongs to the AB hydrolase superfamily. As to expression, expressed in mesodermal tissues. Isoform 1 is exclusively expressed from the paternal allele in all fetal tissues and cell lines examined, whereas isoform 2 is preferentially expressed from the paternal allele in a tissue-type-specific manner.

The protein resides in the endoplasmic reticulum membrane. The chain is Mesoderm-specific transcript protein (Mest) from Mus musculus (Mouse).